The following is a 178-amino-acid chain: ATP synthase subunit delta (178 aa).

This sequence belongs to the ATPase delta chain family. As to quaternary structure, F-type ATPases have 2 components, F(1) - the catalytic core - and F(0) - the membrane proton channel. F(1) has five subunits: alpha(3), beta(3), gamma(1), delta(1), epsilon(1). F(0) has three main subunits: a(1), b(2) and c(10-14). The alpha and beta chains form an alternating ring which encloses part of the gamma chain. F(1) is attached to F(0) by a central stalk formed by the gamma and epsilon chains, while a peripheral stalk is formed by the delta and b chains.

It localises to the cell membrane. In terms of biological role, f(1)F(0) ATP synthase produces ATP from ADP in the presence of a proton or sodium gradient. F-type ATPases consist of two structural domains, F(1) containing the extramembraneous catalytic core and F(0) containing the membrane proton channel, linked together by a central stalk and a peripheral stalk. During catalysis, ATP synthesis in the catalytic domain of F(1) is coupled via a rotary mechanism of the central stalk subunits to proton translocation. Functionally, this protein is part of the stalk that links CF(0) to CF(1). It either transmits conformational changes from CF(0) to CF(1) or is implicated in proton conduction. This Anoxybacillus flavithermus (strain DSM 21510 / WK1) protein is ATP synthase subunit delta.